Reading from the N-terminus, the 381-residue chain is Chaperone protein DnaJ (381 aa).

The J domain maps to 4 to 69; sequence DYYEILGVAR…EKRARYDQFG (66 aa). The segment at 139–221 adopts a CR-type zinc-finger fold; that stretch reads GGEKELRVTR…CGGSGLVRKT (83 aa). Zn(2+)-binding residues include C152, C155, C169, C172, C195, C198, C209, and C212. CXXCXGXG motif repeat units follow at residues 152-159, 169-176, 195-202, and 209-216; these read CGHCHGNG, CPTCQGRG, CSTCRGEG, and CRECGGSG.

The protein belongs to the DnaJ family. As to quaternary structure, homodimer. Zn(2+) is required as a cofactor.

The protein resides in the cytoplasm. In terms of biological role, participates actively in the response to hyperosmotic and heat shock by preventing the aggregation of stress-denatured proteins and by disaggregating proteins, also in an autonomous, DnaK-independent fashion. Unfolded proteins bind initially to DnaJ; upon interaction with the DnaJ-bound protein, DnaK hydrolyzes its bound ATP, resulting in the formation of a stable complex. GrpE releases ADP from DnaK; ATP binding to DnaK triggers the release of the substrate protein, thus completing the reaction cycle. Several rounds of ATP-dependent interactions between DnaJ, DnaK and GrpE are required for fully efficient folding. Also involved, together with DnaK and GrpE, in the DNA replication of plasmids through activation of initiation proteins. The protein is Chaperone protein DnaJ of Carboxydothermus hydrogenoformans (strain ATCC BAA-161 / DSM 6008 / Z-2901).